A 612-amino-acid chain; its full sequence is Calcium-dependent protein kinase 27 (612 aa).

Glycine 2 carries the N-myristoyl glycine lipid modification. A disordered region spans residues 23 to 132 (PRHAAPSSPS…AHIKRISSAG (110 aa)). The segment covering 28–50 (PSSPSQPTTTSRSIPVVLPSAPS) has biased composition (low complexity). Residues 51–100 (SKPPPPTQTAPPVPVVISEPPPPQPQPEPQPAAPSQPPPPQEQPSPPPPA) show a composition bias toward pro residues. A compositionally biased stretch (basic residues) spans 117–127 (SRAKKPAHIKR). Residues 150-408 (YSLGRKLGQG…AHEVLCHPWL (259 aa)) form the Protein kinase domain. ATP-binding positions include 156–164 (LGQGQFGTT) and lysine 179. Catalysis depends on aspartate 274, which acts as the Proton acceptor. Positions 414-444 (APDKPLDSAVLSRLRQFSAMNKLKKMALRVI) are autoinhibitory domain. EF-hand domains follow at residues 451–486 (EEIAGLKEMFKMMDTDNSGQINYEELKAGLERVGAN), 487–522 (MKESEIYQLMQAADIDNSGTIDYGEFIAATLHLNKV), 523–558 (EREDHLYAAFQYFDKDGSGYITSDELQQACDEFGIE), and 561–592 (RLEDMIGEVDQDNDGRIDYNEFVAMMQKTTTG). Positions 464, 466, 468, 470, 475, 500, 502, 504, 506, 511, 536, 538, 540, 542, 547, 570, 572, 574, 576, and 581 each coordinate Ca(2+).

This sequence belongs to the protein kinase superfamily. Ser/Thr protein kinase family. CDPK subfamily.

It localises to the membrane. The catalysed reaction is L-seryl-[protein] + ATP = O-phospho-L-seryl-[protein] + ADP + H(+). It catalyses the reaction L-threonyl-[protein] + ATP = O-phospho-L-threonyl-[protein] + ADP + H(+). With respect to regulation, activated by calcium. Autophosphorylation may play an important role in the regulation of the kinase activity. Functionally, may play a role in signal transduction pathways that involve calcium as a second messenger. This chain is Calcium-dependent protein kinase 27, found in Oryza sativa subsp. japonica (Rice).